Here is a 279-residue protein sequence, read N- to C-terminus: Release factor glutamine methyltransferase (279 aa).

S-adenosyl-L-methionine-binding positions include 118–122 (GTGSG), Asp-141, and Asn-182. 182 to 185 (NPPY) serves as a coordination point for substrate.

The protein belongs to the protein N5-glutamine methyltransferase family. PrmC subfamily.

The catalysed reaction is L-glutaminyl-[peptide chain release factor] + S-adenosyl-L-methionine = N(5)-methyl-L-glutaminyl-[peptide chain release factor] + S-adenosyl-L-homocysteine + H(+). Functionally, methylates the class 1 translation termination release factors RF1/PrfA and RF2/PrfB on the glutamine residue of the universally conserved GGQ motif. The protein is Release factor glutamine methyltransferase of Streptococcus pneumoniae (strain ATCC BAA-255 / R6).